The chain runs to 335 residues: Taste receptor type 2 member 119 (335 aa).

Residues 1–7 (MMEGHML) are Extracellular-facing. The chain crosses the membrane as a helical span at residues 8-28 (FFLLVVVVQFLTGVLANGLIV). The Cytoplasmic segment spans residues 29 to 43 (VVNAIDLIMWKKMAP). Residues 44-64 (LDLLLFCLATSRIILQLCILF) form a helical membrane-spanning segment. Residues 65-81 (AQLGLSCLVRHTLFADN) lie on the Extracellular side of the membrane. An N-linked (GlcNAc...) asparagine glycan is attached at asparagine 81. A helical transmembrane segment spans residues 82-102 (VTFVYIINELSLWFATWLGVF). The Cytoplasmic segment spans residues 103–124 (YCAKIATIPHPLFLWLKMRISR). A helical membrane pass occupies residues 125 to 145 (LVPWLILASVVYVTVTTFIHS). At 146-176 (RETSELPKQIFISFFSKNTTRVRPAHATLLS) the chain is on the extracellular side. Asparagine 163 carries an N-linked (GlcNAc...) asparagine glycan. A helical transmembrane segment spans residues 177 to 197 (VFVFGLTLPFLIFTVAVLLLL). Residues 198 to 224 (SSLWNHSRQMRTMVGTREPSRHALVSA) are Cytoplasmic-facing. A helical transmembrane segment spans residues 225 to 245 (MLSILSFLILYLSHDMVAVLI). At 246–256 (CTQGLHFGSRT) the chain is on the extracellular side. Residues 257-277 (FAFCLLVIGMYPSLHSIVLIL) form a helical membrane-spanning segment. Over 278-335 (GNPKLKRNAKTFIVHCKCCHCARAWVTSRNPRLSDLPVPATHHSANKTSCSEACIMPS) the chain is Cytoplasmic.

Belongs to the G-protein coupled receptor T2R family. Expressed in subsets of taste receptor cells of the tongue and palate epithelium and exclusively in gustducin-positive cells. Expressed in 15% taste bud cells in circumvallate and foliate papillae but only in 2% in fungiform papillae. Expressed in the gastro and duodenal tissue. Not expressed in colon, liver, heart and kidney.

The protein resides in the membrane. In terms of biological role, gustducin-coupled receptor implicated in the perception of bitter compounds in the oral cavity and the gastrointestinal tract. Signals through PLCB2 and the calcium-regulated cation channel TRPM5. In Mus musculus (Mouse), this protein is Taste receptor type 2 member 119 (Tas2r119).